The chain runs to 430 residues: GTPase Obg (430 aa).

Residues 1 to 158 (MFVDQVTISL…LDVTLELKLL (158 aa)) enclose the Obg domain. Residues 118–145 (RGGRGGRGNSRFATPRNPAPDFSENGEP) form a disordered region. The OBG-type G domain occupies 159-329 (ADVGLVGFPS…LLYAIADKLD (171 aa)). GTP is bound by residues 165–172 (GFPSVGKS), 190–194 (FTTIK), 212–215 (DLPG), 282–285 (NKMD), and 310–312 (STI). Mg(2+) contacts are provided by S172 and T192. Residues 352–430 (KHTPSQDKFT…ILGGEFEFVE (79 aa)) form the OCT domain.

It belongs to the TRAFAC class OBG-HflX-like GTPase superfamily. OBG GTPase family. In terms of assembly, monomer. The cofactor is Mg(2+).

The protein resides in the cytoplasm. An essential GTPase which binds GTP, GDP and possibly (p)ppGpp with moderate affinity, with high nucleotide exchange rates and a fairly low GTP hydrolysis rate. Plays a role in control of the cell cycle, stress response, ribosome biogenesis and in those bacteria that undergo differentiation, in morphogenesis control. The chain is GTPase Obg from Staphylococcus haemolyticus (strain JCSC1435).